Here is a 469-residue protein sequence, read N- to C-terminus: MRHFHDTIAAIATAIVPQQGSIGIVRLSGAKAVAIAQSLFEAPGKQPWESHRILYGYVRDPQTKERVDEALLLLMLAPRSYTREDVVEFHCHGGLIPVQRVLQLCVAAGARLADPGEFTLRAFLNGRLDLTQAESVAELVAAQSTTAAQIALAGLTGKLARPLQQIRQTCLSLLAEIEARLDFTDELPPLDPAAIAEQIRQLQHQVEAFLATAERGALIRTGLKVAIVGRPNVGKSSLLNAWSRSDRAIVTDLPGTTRDIVESQLVVGGIPIQVLDTAGIRETDNLVEQIGVQRSRQAALSADLILLVIDASQGWTAADQAIYDQLQLKQRRQQAPQSVLVVLNKADLLSETTEVKDIPLPIAPIPTVLLSALSQRGIEQLEDAILHLVQGQGVSAANLDFAINQRQAGLLEQVHQSLNHVLAAIDAQLPLDFWTIDLHAAARALGTLTGEEVTESVLTEIFSRFCIGK.

Residues Arg-26, Glu-88, and Arg-127 each coordinate (6S)-5-formyl-5,6,7,8-tetrahydrofolate. The 169-residue stretch at 222-390 folds into the TrmE-type G domain; that stretch reads GLKVAIVGRP…LEDAILHLVQ (169 aa). Asn-232 contacts K(+). Residues 232–237, 251–257, 276–279, and 344–347 each bind GTP; these read NVGKSS, TDLPGTT, DTAG, and NKAD. Mg(2+) is bound at residue Ser-236. K(+) contacts are provided by Thr-251, Leu-253, and Thr-256. Residue Thr-257 coordinates Mg(2+). Lys-469 contacts (6S)-5-formyl-5,6,7,8-tetrahydrofolate.

It belongs to the TRAFAC class TrmE-Era-EngA-EngB-Septin-like GTPase superfamily. TrmE GTPase family. Homodimer. Heterotetramer of two MnmE and two MnmG subunits. It depends on K(+) as a cofactor.

Its subcellular location is the cytoplasm. Exhibits a very high intrinsic GTPase hydrolysis rate. Involved in the addition of a carboxymethylaminomethyl (cmnm) group at the wobble position (U34) of certain tRNAs, forming tRNA-cmnm(5)s(2)U34. The sequence is that of tRNA modification GTPase MnmE from Synechococcus elongatus.